The following is a 512-amino-acid chain: ATP synthase subunit alpha 1 (512 aa).

169-176 (GDRQTGKT) serves as a coordination point for ATP.

It belongs to the ATPase alpha/beta chains family. As to quaternary structure, F-type ATPases have 2 components, CF(1) - the catalytic core - and CF(0) - the membrane proton channel. CF(1) has five subunits: alpha(3), beta(3), gamma(1), delta(1), epsilon(1). CF(0) has four main subunits: a(1), b(1), b'(1) and c(9-12).

It is found in the cell inner membrane. The enzyme catalyses ATP + H2O + 4 H(+)(in) = ADP + phosphate + 5 H(+)(out). Produces ATP from ADP in the presence of a proton gradient across the membrane. The alpha chain is a regulatory subunit. The protein is ATP synthase subunit alpha 1 of Cereibacter sphaeroides (strain ATCC 17029 / ATH 2.4.9) (Rhodobacter sphaeroides).